Consider the following 184-residue polypeptide: mRNA transport regulator MTR2 (184 aa).

A disordered region spans residues 111-135; it reads KMGQDATVPIQPNNTGNRNRPNDMN. The segment covering 120-129 has biased composition (polar residues); it reads IQPNNTGNRN. Thr125 carries the phosphothreonine modification.

Interacts with MEX67.

The protein localises to the nucleus. In terms of biological role, affects mRNA transport from the nucleus to the cytoplasm. The sequence is that of mRNA transport regulator MTR2 (MTR2) from Saccharomyces cerevisiae (strain ATCC 204508 / S288c) (Baker's yeast).